The following is a 133-amino-acid chain: Large-conductance mechanosensitive channel (133 aa).

A run of 2 helical transmembrane segments spans residues 10-30 and 76-96; these read FAMR…GAFG and GAFI…FLMI.

Belongs to the MscL family. Homopentamer.

Its subcellular location is the cell inner membrane. In terms of biological role, channel that opens in response to stretch forces in the membrane lipid bilayer. May participate in the regulation of osmotic pressure changes within the cell. The polypeptide is Large-conductance mechanosensitive channel (Pasteurella multocida (strain Pm70)).